Consider the following 175-residue polypeptide: Cytochrome c-type biogenesis protein CcmE (175 aa).

The Cytoplasmic segment spans residues 1 to 8 (MNAVRRKK). The helical; Signal-anchor for type II membrane protein transmembrane segment at 9-29 (LIWVAATLAGAIIAVLLVIYA) threads the bilayer. At 30-175 (IGQQTDYYFD…GNHTTSTLQE (146 aa)) the chain is on the periplasmic side. Heme contacts are provided by histidine 124 and tyrosine 128. The interval 142 to 175 (AAKGVTPTSEQFSPAIPVKQTAGEGNHTTSTLQE) is disordered.

It belongs to the CcmE/CycJ family.

The protein localises to the cell inner membrane. Functionally, heme chaperone required for the biogenesis of c-type cytochromes. Transiently binds heme delivered by CcmC and transfers the heme to apo-cytochromes in a process facilitated by CcmF and CcmH. The polypeptide is Cytochrome c-type biogenesis protein CcmE (Psychrobacter sp. (strain PRwf-1)).